The chain runs to 298 residues: ADP/ATP translocase 2 (298 aa).

At Met1 the chain carries N-acetylmethionine. Over 1–7 (MTDAAVS) the chain is Mitochondrial intermembrane. An N-acetylthreonine; in ADP/ATP translocase 2, N-terminally processed modification is found at Thr2. The Solcar 1 repeat unit spans residues 6-98 (VSFAKDFLAG…FAFKDKYKQI (93 aa)). A Phosphoserine modification is found at Ser7. A helical membrane pass occupies residues 8–37 (FAKDFLAGGVAAAISKTAVAPIERVKLLLQ). Position 23 is an N6-malonyllysine (Lys23). The Mitochondrial matrix portion of the chain corresponds to 38–74 (VQHASKQITADKQYKGIIDCVVRIPKEQGVLSFWRGN). Position 43 is an N6-succinyllysine (Lys43). Lys52 carries the N6,N6,N6-trimethyllysine; alternate modification. Position 52 is an N6,N6-dimethyllysine; alternate (Lys52). Position 52 is an N6-methyllysine; alternate (Lys52). The chain crosses the membrane as a helical span at residues 75 to 99 (LANVIRYFPTQALNFAFKDKYKQIF). ADP contacts are provided by Arg80 and Lys92. N6-malonyllysine occurs at positions 92 and 96. Topologically, residues 100–109 (LGGVDKRTQF) are mitochondrial intermembrane. N6-acetyllysine; alternate is present on Lys105. Position 105 is an N6-succinyllysine; alternate (Lys105). A helical membrane pass occupies residues 110 to 130 (WRYFAGNLASGGAAGATSLCF). 2 Solcar repeats span residues 111-201 (RYFA…AKGM) and 212-297 (ISWM…IKKF). The Mitochondrial matrix segment spans residues 131-178 (VYPLDFARTRLAADVGKAGAEREFRGLGDCLVKIYKSDGIRGLYQGFN). Lys147 carries the N6-methyllysine; alternate modification. Residue Lys147 is modified to N6-acetyllysine; alternate. Lys147 is modified (N6-succinyllysine; alternate). Position 147 is an N6-malonyllysine; alternate (Lys147). An N6-acetyllysine mark is found at Lys163 and Lys166. The chain crosses the membrane as a helical span at residues 179-199 (VSVQGIIIYRAAYFGIYDTAK). Residues 200–210 (GMLPDPKNTHI) are Mitochondrial intermembrane-facing. Residues 211–231 (FISWMIAQSVTAVAGLTSYPF) traverse the membrane as a helical segment. Over 232 to 273 (DTVRRRMMMQSGRKGTDIMYTGTLDCWRKIARDEGAKAFFKG) the chain is Mitochondrial matrix. Arg235 contributes to the ADP binding site. Residues 235-240 (RRRMMM) form an important for transport activity region. The short motif at 235–240 (RRRMMM) is the Nucleotide carrier signature motif element. Lys268 bears the N6-acetyllysine; alternate mark. Lys268 is modified (N6-succinyllysine; alternate). Residues 274-291 (AWSNVLRGMGGAFVLVLY) traverse the membrane as a helical segment. Residues 292–298 (DEIKKFT) lie on the Mitochondrial intermembrane side of the membrane.

The protein belongs to the mitochondrial carrier (TC 2.A.29) family. In terms of assembly, monomer. Component of the MMXD complex, which includes CIAO1, ERCC2, CIAO2B, MMS19 and SLC25A5/ANT2. Interacts with AK4. Interacts with TIMM44; leading to inhibit the presequence translocase TIMM23, thereby promoting stabilization of PINK1. Post-translationally, trimethylated by ANTKMT at Lys-52.

It localises to the mitochondrion inner membrane. The protein resides in the membrane. The enzyme catalyses ADP(in) + ATP(out) = ADP(out) + ATP(in). It catalyses the reaction H(+)(in) = H(+)(out). The matrix-open state (m-state) is inhibited by the membrane-permeable bongkrekic acid (BKA). The cytoplasmic-open state (c-state) is inhibited by the membrane-impermeable toxic inhibitor carboxyatractyloside (CATR). Proton transporter activity is inhibited by ADP:ATP antiporter activity. Functionally, ADP:ATP antiporter that mediates import of ADP into the mitochondrial matrix for ATP synthesis, and export of ATP out to fuel the cell. Cycles between the cytoplasmic-open state (c-state) and the matrix-open state (m-state): operates by the alternating access mechanism with a single substrate-binding site intermittently exposed to either the cytosolic (c-state) or matrix (m-state) side of the inner mitochondrial membrane. In addition to its ADP:ATP antiporter activity, also involved in mitochondrial uncoupling and mitochondrial permeability transition pore (mPTP) activity. Plays a role in mitochondrial uncoupling by acting as a proton transporter: proton transport uncouples the proton flows via the electron transport chain and ATP synthase to reduce the efficiency of ATP production and cause mitochondrial thermogenesis. Proton transporter activity is inhibited by ADP:ATP antiporter activity, suggesting that SLC25A5/ANT2 acts as a master regulator of mitochondrial energy output by maintaining a delicate balance between ATP production (ADP:ATP antiporter activity) and thermogenesis (proton transporter activity). Proton transporter activity requires free fatty acids as cofactor, but does not transport it. Probably mediates mitochondrial uncoupling in tissues that do not express UCP1. Also plays a key role in mPTP opening, a non-specific pore that enables free passage of the mitochondrial membranes to solutes of up to 1.5 kDa, and which contributes to cell death. It is however unclear if SLC25A5/ANT2 constitutes a pore-forming component of mPTP or regulates it. Acts as a regulator of mitophagy independently of ADP:ATP antiporter activity: promotes mitophagy via interaction with TIMM44, leading to inhibit the presequence translocase TIMM23, thereby promoting stabilization of PINK1. As part of the mitotic spindle-associated MMXD complex it may play a role in chromosome segregation. This is ADP/ATP translocase 2 from Bos taurus (Bovine).